The following is a 245-amino-acid chain: rRNA adenine N-6-methyltransferase (245 aa).

Residues Asn10, Leu12, Gly37, Glu58, Asp83, and Asn100 each contribute to the S-adenosyl-L-methionine site.

Belongs to the class I-like SAM-binding methyltransferase superfamily. rRNA adenine N(6)-methyltransferase family.

It catalyses the reaction adenosine(2085) in 23S rRNA + 2 S-adenosyl-L-methionine = N(6)-dimethyladenosine(2085) in 23S rRNA + 2 S-adenosyl-L-homocysteine + 2 H(+). In terms of biological role, this protein produces a dimethylation of the adenine residue at position 2085 in 23S rRNA, resulting in reduced affinity between ribosomes and macrolide-lincosamide-streptogramin B antibiotics. The chain is rRNA adenine N-6-methyltransferase (ermBC) from Escherichia coli.